Consider the following 517-residue polypeptide: Transcription factor MTB3 (517 aa).

The tract at residues G290–N331 is disordered. Over residues R297–K314 the composition is skewed to basic and acidic residues. The basic motif; degenerate stretch occupies residues E327–R340. The region spanning E327–L376 is the bHLH domain. Positions E341–L376 are helix-loop-helix motif.

Its subcellular location is the nucleus. Transcription factor that negatively regulates jasmonate (JA) signaling. Negatively regulates JA-dependent response to wounding, JA-induced expression of defense genes, JA-dependent responses against herbivorous insects, and JA-dependent resistance against Botrytis cinerea infection. Plays a positive role in resistance against the bacterial pathogen Pseudomonas syringae pv tomato DC3000. The protein is Transcription factor MTB3 of Solanum lycopersicum (Tomato).